We begin with the raw amino-acid sequence, 459 residues long: 2-(3-amino-3-carboxypropyl)histidine synthase subunit 1 (459 aa).

The segment at 1-68 is disordered; the sequence is MEDDRAQVDL…AGANTSIEDS (68 aa). A compositionally biased stretch (low complexity) spans 41–61; that stretch reads SAAAGKSSSSSSNSTSQPAGA. [4Fe-4S] cluster is bound by residues C165, C268, and C403.

Belongs to the DPH1/DPH2 family. DPH1 subfamily. As to quaternary structure, component of the 2-(3-amino-3-carboxypropyl)histidine synthase complex composed of dph-1, dph-2, dph-3 and a NADH-dependent reductase, predominantly cbr-1. Requires [4Fe-4S] cluster as cofactor.

It localises to the cytoplasm. The catalysed reaction is L-histidyl-[translation elongation factor 2] + S-adenosyl-L-methionine = 2-[(3S)-amino-3-carboxypropyl]-L-histidyl-[translation elongation factor 2] + S-methyl-5'-thioadenosine + H(+). It functions in the pathway protein modification; peptidyl-diphthamide biosynthesis. Functionally, catalyzes the first step of diphthamide biosynthesis, a post-translational modification of histidine which occurs in elongation factor 2. Dph-1 and dph-2 transfer a 3-amino-3-carboxypropyl (ACP) group from S-adenosyl-L-methionine (SAM) to a histidine residue, the reaction is assisted by a reduction system comprising dph-3 and a NADH-dependent reductase, predominantly cbr-1. The sequence is that of 2-(3-amino-3-carboxypropyl)histidine synthase subunit 1 (dph-1) from Neurospora crassa (strain ATCC 24698 / 74-OR23-1A / CBS 708.71 / DSM 1257 / FGSC 987).